Reading from the N-terminus, the 69-residue chain is Conotoxin Eb6.21 (69 aa).

The N-terminal stretch at 1 to 17 is a signal peptide; that stretch reads VLIIAVLFLTACQLTTA. The propeptide occupies 18–41; it reads ETYSRGRQKHRARRSTDKNSKWTR. 3 cysteine pairs are disulfide-bonded: Cys-43–Cys-57, Cys-50–Cys-61, and Cys-56–Cys-68.

This sequence belongs to the conotoxin O1 superfamily. Expressed by the venom duct.

It localises to the secreted. This Conus ebraeus (Hebrew cone) protein is Conotoxin Eb6.21 (E1).